The chain runs to 307 residues: Olfactory receptor 13G1 (307 aa).

Residues 1-22 (MNHSVVTEFIILGLTKKPELQG) lie on the Extracellular side of the membrane. Asn2 carries an N-linked (GlcNAc...) asparagine glycan. A helical membrane pass occupies residues 23–43 (IIFLFFLIVYLVAFLGNMLII). The Cytoplasmic segment spans residues 44 to 51 (IAKIYNNT). A helical transmembrane segment spans residues 52 to 72 (LHTPMYVFLLTLAVVDIICTT). The Extracellular segment spans residues 73 to 96 (SIIPKMLGTMLTSENTISYAGCMS). A disulfide bond links Cys94 and Cys186. A helical transmembrane segment spans residues 97 to 117 (QLFLFTWSLGAEMVLFTTMAY). The Cytoplasmic segment spans residues 118–136 (DRYVAICFPLHYSTIMNHH). Residues 137-157 (MCVALLSMVMAIAVTNSWVHT) traverse the membrane as a helical segment. Residues 158-194 (ALIMRLTFCGPNTIDHFFCEIPPLLALSCSPVRINEV) lie on the Extracellular side of the membrane. A helical transmembrane segment spans residues 195 to 214 (MVYVADITLAIGDFILTCIS). Topologically, residues 215 to 234 (YGFIIVAILRIRTVEGKRKA) are cytoplasmic. A helical membrane pass occupies residues 235-255 (FSTCSSHLTVVTLYYSPVIYT). The Extracellular portion of the chain corresponds to 256–268 (YIRPASSYTFERD). A helical membrane pass occupies residues 269–289 (KVVAALYTLVTPTLNPMVYSF). At 290 to 307 (QNREMQAGIRKVFAFLKH) the chain is on the cytoplasmic side.

The protein belongs to the G-protein coupled receptor 1 family.

The protein localises to the cell membrane. Its function is as follows. Odorant receptor. The sequence is that of Olfactory receptor 13G1 (OR13G1) from Homo sapiens (Human).